The chain runs to 473 residues: Ribosomal RNA small subunit methyltransferase F (473 aa).

S-adenosyl-L-methionine-binding positions include 123–129 (AAAPGSK), Glu-147, Asp-174, and Asp-192. Cys-245 (nucleophile) is an active-site residue.

The protein belongs to the class I-like SAM-binding methyltransferase superfamily. RsmB/NOP family.

The protein localises to the cytoplasm. It catalyses the reaction cytidine(1407) in 16S rRNA + S-adenosyl-L-methionine = 5-methylcytidine(1407) in 16S rRNA + S-adenosyl-L-homocysteine + H(+). Functionally, specifically methylates the cytosine at position 1407 (m5C1407) of 16S rRNA. In Vibrio cholerae serotype O1 (strain ATCC 39315 / El Tor Inaba N16961), this protein is Ribosomal RNA small subunit methyltransferase F.